Consider the following 85-residue polypeptide: UPF0291 protein SP_1473 (85 aa).

A disordered region spans residues Thr62 to Ser85.

Belongs to the UPF0291 family.

It localises to the cytoplasm. The polypeptide is UPF0291 protein SP_1473 (Streptococcus pneumoniae serotype 4 (strain ATCC BAA-334 / TIGR4)).